The chain runs to 245 residues: Biosynthetic peptidoglycan transglycosylase (245 aa).

The helical transmembrane segment at 29 to 49 (IVLAVLIVLILPYALIVFYLL) threads the bilayer.

Belongs to the glycosyltransferase 51 family.

The protein localises to the cell inner membrane. It catalyses the reaction [GlcNAc-(1-&gt;4)-Mur2Ac(oyl-L-Ala-gamma-D-Glu-L-Lys-D-Ala-D-Ala)](n)-di-trans,octa-cis-undecaprenyl diphosphate + beta-D-GlcNAc-(1-&gt;4)-Mur2Ac(oyl-L-Ala-gamma-D-Glu-L-Lys-D-Ala-D-Ala)-di-trans,octa-cis-undecaprenyl diphosphate = [GlcNAc-(1-&gt;4)-Mur2Ac(oyl-L-Ala-gamma-D-Glu-L-Lys-D-Ala-D-Ala)](n+1)-di-trans,octa-cis-undecaprenyl diphosphate + di-trans,octa-cis-undecaprenyl diphosphate + H(+). The protein operates within cell wall biogenesis; peptidoglycan biosynthesis. Functionally, peptidoglycan polymerase that catalyzes glycan chain elongation from lipid-linked precursors. The sequence is that of Biosynthetic peptidoglycan transglycosylase from Rhizobium johnstonii (strain DSM 114642 / LMG 32736 / 3841) (Rhizobium leguminosarum bv. viciae).